We begin with the raw amino-acid sequence, 111 residues long: P antigen family member 2 (111 aa).

The interval 1 to 66 (MSELLRARSQ…NQAVPAFQGP (66 aa)) is disordered. Polar residues predominate over residues 8–24 (RSQSSERGNDQESSQPV).

Belongs to the GAGE family.

This chain is P antigen family member 2 (PAGE2), found in Homo sapiens (Human).